Reading from the N-terminus, the 356-residue chain is Methylthioribose-1-phosphate isomerase (356 aa).

Substrate is bound by residues 53 to 55 (RGA), Arg-97, and Gln-203. Asp-244 functions as the Proton donor in the catalytic mechanism. 254 to 255 (NK) is a substrate binding site.

The protein belongs to the eIF-2B alpha/beta/delta subunits family. MtnA subfamily.

It carries out the reaction 5-(methylsulfanyl)-alpha-D-ribose 1-phosphate = 5-(methylsulfanyl)-D-ribulose 1-phosphate. The protein operates within amino-acid biosynthesis; L-methionine biosynthesis via salvage pathway; L-methionine from S-methyl-5-thio-alpha-D-ribose 1-phosphate: step 1/6. In terms of biological role, catalyzes the interconversion of methylthioribose-1-phosphate (MTR-1-P) into methylthioribulose-1-phosphate (MTRu-1-P). The chain is Methylthioribose-1-phosphate isomerase from Rhodopirellula baltica (strain DSM 10527 / NCIMB 13988 / SH1).